We begin with the raw amino-acid sequence, 315 residues long: Ferrochelatase (315 aa).

Histidine 193 and glutamate 273 together coordinate Fe cation.

It belongs to the ferrochelatase family.

It localises to the cytoplasm. The catalysed reaction is heme b + 2 H(+) = protoporphyrin IX + Fe(2+). The protein operates within porphyrin-containing compound metabolism; protoheme biosynthesis; protoheme from protoporphyrin-IX: step 1/1. Catalyzes the ferrous insertion into protoporphyrin IX. This Wolbachia pipientis wMel protein is Ferrochelatase.